The following is a 328-amino-acid chain: Malate dehydrogenase (328 aa).

12-18 contributes to the NAD(+) binding site; that stretch reads GAAGQIA. The substrate site is built by R93 and R99. NAD(+) contacts are provided by residues N106, Q113, and 130 to 132; that span reads VGN. Substrate-binding residues include N132 and R163. Residue H188 is the Proton acceptor of the active site.

It belongs to the LDH/MDH superfamily. MDH type 2 family.

It catalyses the reaction (S)-malate + NAD(+) = oxaloacetate + NADH + H(+). Its function is as follows. Catalyzes the reversible oxidation of malate to oxaloacetate. The polypeptide is Malate dehydrogenase (Burkholderia multivorans (strain ATCC 17616 / 249)).